A 442-amino-acid polypeptide reads, in one-letter code: Putative amino acid transporter YuiF (442 aa).

The next 11 helical transmembrane spans lie at Ile-21–Gly-41, Leu-51–Leu-71, Leu-103–Ile-123, Leu-146–Phe-166, Ile-190–Ile-210, Ile-236–Thr-256, Val-259–Met-279, Met-292–Leu-312, Leu-335–Phe-355, Ile-364–Gly-384, and Val-421–Val-441.

It is found in the cell membrane. This is Putative amino acid transporter YuiF (yuiF) from Bacillus subtilis (strain 168).